Here is a 290-residue protein sequence, read N- to C-terminus: Arginine N-acetyltransferase avaD (290 aa).

Acetyl-CoA is bound at residue 157 to 163 (NQAHFEA).

This sequence belongs to the acetyltransferase family. GCN5 subfamily.

Its pathway is secondary metabolite metabolism. Arginine N-acetyltransferase; part of the cluster that mediates the biosynthesis of a highly modified cyclo-arginine-tryptophan dipeptide (cRW). Within the pathway, avaD catalyzes the N-acetylation of the guanidine group. The first step of the pathway is perfornmed by the arginine-containing cyclodipeptide synthase (RCPDS) avaA that acts as the scaffold-generating enzyme and is responsible for formation of the cyclo-Arg-Trp (cRW) diketopiperazine. AvaB then acts as a multifunctional flavoenzyme that is responsible for generating the cyclo-Arg-formylkynurenine DKP, which can be deformylated by avaC. AvaB then further catalyzes an additional N-oxidation followed by cyclization and dehydration. The next step is an N-acetylation of the guanidine group catalyzed by the arginine N-acetyltransferase avaD. The roles of the additional enzymes identified within the ava cluster still have to be determined. This is Arginine N-acetyltransferase avaD from Aspergillus versicolor.